The primary structure comprises 265 residues: MEVLKRENPLIHMITNYVTVNDLAQVTINYGGLPLMATHHDELKVITKMANGLLVNIGTLEPYQMESSMISMKIAKEKGIPSVLDSVCVQVSKLRRDFAKKIILEGEPSLIKGNLAEIKTLIGETSNSIGIDSFEDSLSENTKNKIKEYAKERNLIVVVSGVVDFITNGEESASVKNGTYKMSKITGTGCMLGALLTLALSFYDHKDLRFKEVVKAVSTWGICGELAEERLREKEGLMTFKYNLLDELSIINDEIIKEREKVIYE.

Position 36 (Met36) interacts with substrate. Lys112 and Ser160 together coordinate ATP. Position 187 (Gly187) interacts with substrate.

This sequence belongs to the Thz kinase family. Requires Mg(2+) as cofactor.

The enzyme catalyses 5-(2-hydroxyethyl)-4-methylthiazole + ATP = 4-methyl-5-(2-phosphooxyethyl)-thiazole + ADP + H(+). The protein operates within cofactor biosynthesis; thiamine diphosphate biosynthesis; 4-methyl-5-(2-phosphoethyl)-thiazole from 5-(2-hydroxyethyl)-4-methylthiazole: step 1/1. In terms of biological role, catalyzes the phosphorylation of the hydroxyl group of 4-methyl-5-beta-hydroxyethylthiazole (THZ). The sequence is that of Hydroxyethylthiazole kinase from Clostridium perfringens (strain SM101 / Type A).